Reading from the N-terminus, the 578-residue chain is Membrane protein insertase YidC (578 aa).

Residues 3–23 traverse the membrane as a helical segment; sequence IQRSILIVALAVVSYLLVLQW. A disordered region spans residues 34-71; it reads AASASMNTTQGLPDTPSAAGTSSDVPTAQSGAAGSEAA. The segment covering 37–65 has biased composition (polar residues); it reads ASMNTTQGLPDTPSAAGTSSDVPTAQSGA. 5 helical membrane passes run 361–381, 387–407, 457–477, 500–520, and 535–555; these read LELT…FWLL, LIGN…LAFF, LGGC…YWVL, PFFI…MLNP, and PIIF…YWVV.

This sequence belongs to the OXA1/ALB3/YidC family. Type 1 subfamily. In terms of assembly, interacts with the Sec translocase complex via SecD. Specifically interacts with transmembrane segments of nascent integral membrane proteins during membrane integration.

The protein localises to the cell inner membrane. In terms of biological role, required for the insertion and/or proper folding and/or complex formation of integral membrane proteins into the membrane. Involved in integration of membrane proteins that insert both dependently and independently of the Sec translocase complex, as well as at least some lipoproteins. Aids folding of multispanning membrane proteins. The protein is Membrane protein insertase YidC of Pseudomonas paraeruginosa (strain DSM 24068 / PA7) (Pseudomonas aeruginosa (strain PA7)).